The following is a 1713-amino-acid chain: Serine/threonine-protein kinase MRCK beta (1713 aa).

The Protein kinase domain occupies F76 to F342. ATP contacts are provided by residues I82–V90 and K105. The active-site Proton acceptor is the D200. S221 and S233 each carry phosphoserine; by autocatalysis. The residue at position 239 (T239) is a Phosphothreonine; by autocatalysis. The AGC-kinase C-terminal domain maps to E343–G413. At T423 the chain carries Phosphothreonine. Residues L434 to H649 are a coiled coil. The interval L461–K485 is disordered. Polar residues predominate over residues E463 to S481. Position 671 is an omega-N-methylarginine (R671). 2 coiled-coil regions span residues Q681–E815 and A882–D939. Phosphoserine is present on S927. A Phosphotyrosine modification is found at Y954. Composition is skewed to polar residues over residues A971–E994 and R1001–T1014. The interval A971–T1014 is disordered. The segment at A1026–C1076 adopts a Phorbol-ester/DAG-type zinc-finger fold. One can recognise a PH domain in the interval G1096–A1215. Residues I1241–N1515 enclose the CNH domain. One can recognise a CRIB domain in the interval I1585–G1598. The interval P1615–A1713 is disordered. Positions D1666–K1677 are enriched in basic and acidic residues. Phosphoserine is present on residues S1682, S1684, S1688, S1692, and S1695.

This sequence belongs to the protein kinase superfamily. AGC Ser/Thr protein kinase family. DMPK subfamily. Homodimer and homotetramer via the coiled coil regions. Interacts tightly with GTP-bound but not GDP-bound CDC42. Interacts with TJP1; this interaction requires the presence of catalytically active CDC42. Forms a tripartite complex with MYO18A and LURAP1 with the latter acting as an adapter connecting CDC42BPB and MYO18A. LURAP1 binding results in activation of CDC42BPB by abolition of its negative autoregulation. Interacts with STRIP1, STRN3 and SIKE1. Interacts with CPNE4 (via VWFA domain). Interacts with LURAP1. Interacts (via AGC-kinase C-terminal domain) with FAM89B/LRAP25 (via LRR repeat). Forms a tripartite complex with FAM89B/LRAP25 and LIMK1. It depends on Mg(2+) as a cofactor. In terms of processing, proteolytically cleaved by caspases upon apoptosis induction. In terms of tissue distribution, expressed in all tissues examined with highest levels in lung and kidney.

The protein resides in the cytoplasm. It is found in the cell membrane. Its subcellular location is the cell junction. The protein localises to the cell projection. It localises to the lamellipodium. The catalysed reaction is L-seryl-[protein] + ATP = O-phospho-L-seryl-[protein] + ADP + H(+). It carries out the reaction L-threonyl-[protein] + ATP = O-phospho-L-threonyl-[protein] + ADP + H(+). Its activity is regulated as follows. Maintained in an inactive, closed conformation by an interaction between the kinase domain and the negative autoregulatory C-terminal coiled-coil region. Agonist binding to the phorbol ester binding site disrupts this, releasing the kinase domain to allow N-terminus-mediated dimerization and kinase activation by transautophosphorylation. Inhibited by chelerythrine chloride. In terms of biological role, serine/threonine-protein kinase which is an important downstream effector of CDC42 and plays a role in the regulation of cytoskeleton reorganization and cell migration. Regulates actin cytoskeletal reorganization via phosphorylation of PPP1R12C and MYL9/MLC2. In concert with MYO18A and LURAP1, is involved in modulating lamellar actomyosin retrograde flow that is crucial to cell protrusion and migration. Phosphorylates PPP1R12A. In concert with FAM89B/LRAP25 mediates the targeting of LIMK1 to the lamellipodium resulting in its activation and subsequent phosphorylation of CFL1 which is important for lamellipodial F-actin regulation. This is Serine/threonine-protein kinase MRCK beta from Rattus norvegicus (Rat).